Here is a 414-residue protein sequence, read N- to C-terminus: uncharacterized protein (414 aa).

The chain crosses the membrane as a helical span at residues 367–384; sequence TTWALTLICIACILLFFV.

The protein localises to the virion membrane. This is an uncharacterized protein from Human cytomegalovirus (strain Merlin) (HHV-5).